The chain runs to 340 residues: Pilin (340 aa).

An N-terminal signal peptide occupies residues M1–G23. 2 cross-links (isoaspartyl lysine isopeptide (Lys-Asn)) span residues K36 to N168 and K179 to N303. K161 is covalently cross-linked (Threonyl lysine isopeptide (Lys-Thr) (interchain with T-311)). Positions E308 to G312 match the EVPTG sorting signal motif. Position 311 is a pentaglycyl murein peptidoglycan amidated threonine; alternate (T311). T311 is covalently cross-linked (Threonyl lysine isopeptide (Thr-Lys) (interchain with K-161); alternate). Residues G312–A340 constitute a propeptide, removed by sortase C1.

Belongs to the Streptococcus pilin family. As to quaternary structure, forms columns of about 3-nanometers in diameter of head-to-tail-assembled molecules. Proteolytically processed and assembled in pili through a transpeptidation reaction catalyzed by the sortase C1. The last pilin subunit is cross-linked to the peptidoglycan.

The protein resides in the secreted. The protein localises to the cell wall. Its subcellular location is the fimbrium. Its function is as follows. Major component of the pilus. A stack of the pilin subunits, joined by intermolecular isopeptide bonds, forms the pilus. The pilus is required for bacterial adhesion to host cells, for bacterial aggregation, and for biofilm formation. This chain is Pilin, found in Streptococcus pyogenes serotype M1.